We begin with the raw amino-acid sequence, 156 residues long: Maintenance of carboxysome distribution protein B (156 aa).

The interval 1–55 is required for interaction with McdA:DNA complex; the sequence is MSNNALDRLINKQKPKVPPRNDVVSESVSNDIKTQGQQELNTSLPPSDTKATPEE. The segment at 1–79 is disordered; sequence MSNNALDRLI…QKPKLSPDTF (79 aa). The segment covering 24–50 has biased composition (polar residues); sequence VSESVSNDIKTQGQQELNTSLPPSDTK. Residues 51 to 63 are compositionally biased toward basic and acidic residues; it reads ATPEEMPTSHESE. A coiled-coil region spans residues 122–156; it reads PEELAQVIQLAQERLSQRKAIADYKRAKTMQERFL.

As to quaternary structure, homodimerizes; may exist in higher order oligomers in solution. Forms a complex with McdA:DNA. Homohexamerizes, interacts with shell components of the carboxysome.

The protein resides in the carboxysome. Functionally, mcdA and McdB together mediate carboxysome (Cb) spacing, size, ultrastructure and probably inheritance in the cell, together they prevent Cb aggregation. McdA is an ATPase that forms dynamic gradients on the nucleoid in response to adapter protein McdB, which associates with carboxysomes. The interplay between McdA gradients on the nucleoid and McdB-bound carboxysomes result in the equal spacing of Cbs along the cell length. Stimulates the ATPase activity of McdA, causing McdA to be released from DNA. Undergoes liquid-liquid phase separation. Incorrect positioning (aggregation) of carboxysomes results in reduced CO(2) fixation by encapsulated ribulose-1,5-bisphosphate carboxylase (RuBisCO, cbbL/cbbS), which leads to slower growth. This Gloeothece citriformis (strain PCC 7424) (Cyanothece sp. (strain PCC 7424)) protein is Maintenance of carboxysome distribution protein B.